Reading from the N-terminus, the 161-residue chain is Lincosamide resistance protein (161 aa).

In Staphylococcus haemolyticus, this protein is Lincosamide resistance protein (linA).